The sequence spans 395 residues: Transmembrane protein 79 (395 aa).

Residues Met1–Glu115 form a disordered region. The Cytoplasmic segment spans residues Met1–Ser204. Residues Val205–Phe225 form a helical membrane-spanning segment. At Asp226–Gly244 the chain is on the extracellular side. A helical membrane pass occupies residues Val245–Phe265. At Ala266–Gln290 the chain is on the cytoplasmic side. A helical transmembrane segment spans residues Leu291–Leu311. At Lys312–Leu313 the chain is on the extracellular side. The helical transmembrane segment at Leu314–Val334 threads the bilayer. At Gly335–Tyr343 the chain is on the cytoplasmic side. Residues Gly344–Val364 form a helical membrane-spanning segment. Residues Glu365–Gly395 are Extracellular-facing.

It localises to the lysosome. The protein resides in the golgi apparatus. It is found in the trans-Golgi network. Its subcellular location is the membrane. Contributes to the epidermal integrity and skin barrier function. Plays a role in the lamellar granule (LG) secretory system and in the stratum corneum (SC) epithelial cell formation. This is Transmembrane protein 79 (TMEM79) from Bos taurus (Bovine).